Consider the following 447-residue polypeptide: Teichoic acids export ATP-binding protein TagH (447 aa).

Residues D24–H246 enclose the ABC transporter domain. G60–S67 contacts ATP. The tract at residues F247–E447 is unknown. The disordered stretch occupies residues N359 to S393. Composition is skewed to polar residues over residues A360–A369 and E379–S393. A LysM domain is found at S398–L442.

This sequence belongs to the ABC transporter superfamily. Teichoic acids exporter (TC 3.A.1.104.1) family. The complex is composed of two ATP-binding proteins (TagH) and two transmembrane proteins (TagG).

Its subcellular location is the cell membrane. The catalysed reaction is ATP + H2O + teichoic acidSide 1 = ADP + phosphate + teichoic acidSide 2.. Its function is as follows. Part of the ABC transporter complex TagGH involved in teichoic acids export. Responsible for energy coupling to the transport system. The chain is Teichoic acids export ATP-binding protein TagH from Enterococcus faecalis (strain ATCC 700802 / V583).